Here is a 314-residue protein sequence, read N- to C-terminus: Endolytic peptidoglycan transglycosylase RlpA (314 aa).

Residues 1 to 19 (MGWALKKVCFLGVIFLISA) form the signal peptide. The N-palmitoyl cysteine moiety is linked to residue Cys20. Cys20 is lipidated: S-diacylglycerol cysteine. Residues 241–314 (SVSGGKFSLQ…YNQNAVLTRE (74 aa)) enclose the SPOR domain.

This sequence belongs to the RlpA family.

The protein localises to the cell membrane. Functionally, lytic transglycosylase with a strong preference for naked glycan strands that lack stem peptides. This Helicobacter pylori (strain J99 / ATCC 700824) (Campylobacter pylori J99) protein is Endolytic peptidoglycan transglycosylase RlpA.